A 296-amino-acid chain; its full sequence is Protoheme IX farnesyltransferase 2 (296 aa).

Transmembrane regions (helical) follow at residues 7-27, 36-56, 83-103, 108-128, 134-154, 163-183, 207-227, 229-249, and 265-285; these read LLVA…GGYF, PMLL…GCVL, LKAA…LLWW, LTTA…SLWF, YGTL…YCAV, ASLL…IAIF, IHIV…CLGG, AGYG…AIAL, and FAFS…DFQV.

The protein belongs to the UbiA prenyltransferase family. Protoheme IX farnesyltransferase subfamily.

It is found in the cell inner membrane. It catalyses the reaction heme b + (2E,6E)-farnesyl diphosphate + H2O = Fe(II)-heme o + diphosphate. The protein operates within porphyrin-containing compound metabolism; heme O biosynthesis; heme O from protoheme: step 1/1. Functionally, converts heme B (protoheme IX) to heme O by substitution of the vinyl group on carbon 2 of heme B porphyrin ring with a hydroxyethyl farnesyl side group. The chain is Protoheme IX farnesyltransferase 2 from Pseudomonas aeruginosa (strain UCBPP-PA14).